The sequence spans 482 residues: Cobyric acid synthase (482 aa).

Residues 243–430 form the GATase cobBQ-type domain; the sequence is ACKVVVPQLE…LHGLFTSDAF (188 aa). Cys-325 acts as the Nucleophile in catalysis. Residue His-422 is part of the active site.

It belongs to the CobB/CobQ family. CobQ subfamily.

It functions in the pathway cofactor biosynthesis; adenosylcobalamin biosynthesis. Functionally, catalyzes amidations at positions B, D, E, and G on adenosylcobyrinic A,C-diamide. NH(2) groups are provided by glutamine, and one molecule of ATP is hydrogenolyzed for each amidation. The polypeptide is Cobyric acid synthase (Ruegeria sp. (strain TM1040) (Silicibacter sp.)).